The chain runs to 33 residues: Beta/kappa-theraphotoxin-Hlv1a (33 aa).

Intrachain disulfides connect Cys2/Cys17, Cys9/Cys22, and Cys16/Cys29. At Ile33 the chain carries Isoleucine amide.

This sequence belongs to the neurotoxin 10 (Hwtx-1) family. 11 (haplotoxin-2) subfamily. In terms of tissue distribution, expressed by the venom gland.

It localises to the secreted. Functionally, spider venom neurotoxin that blocks voltage-gated sodium channel Nav1.3/SCN3A in human (IC(50)=80 nM) and rat (IC(50)=160 nM). Partially inhibits human Kv11.1/KCNH2/ERG (25% at 175 uM). The sequence is that of Beta/kappa-theraphotoxin-Hlv1a from Cyriopagopus lividus (Cobalt blue tarantula).